The chain runs to 80 residues: uncharacterized protein (80 aa).

The protein belongs to the 2-oxoacid dehydrogenase family.

This is an uncharacterized protein from Mycobacterium tuberculosis (strain CDC 1551 / Oshkosh).